A 35-amino-acid polypeptide reads, in one-letter code: uncharacterized protein (35 aa).

A helical membrane pass occupies residues Leu14 to Phe34.

The protein resides in the endoplasmic reticulum membrane. This is an uncharacterized protein from Saccharomyces cerevisiae (strain ATCC 204508 / S288c) (Baker's yeast).